Consider the following 611-residue polypeptide: MALRYLNKFSLLSLAVPTLAAPIGSSFGVPGTDALYDYVVVGAGNAGAPVAYRLAETGHTVALVEAGSLYEYGNGNLSQIPANSLFFIGKDPEWTNNLVDWNFVTSPQAEWNNASVHYASGKVLGGSTGRNLMTYHLPTKGSLDRWAEDVSDESWNFDNMLPYIMKSQRFTPPNNNLRFRNATPTYDPAVLGRRGRLDVTYPNYANGLASWLVRGFRDIGLAAIRGLNGGQLIGSAYTLSTIQPGNQHRASSKTAYLDPLIGRNLNLIIYQSTHAKRILFSNDTVATGVRVSSEGQEYTLSARNEVIVSAGAFKTPQLLMVSGIGPAANLERYGIPLVADRPGVGQNLQDHTLAGPSYRVNAITGSSNSIPEFITEAQRQYNSNPPRGVLTNTGVDILGWEKVPEQLRGNFSTETEDALASLPEDWPELEYLPVYGYFGDQNNYMVTPNDGFNYLTIAAAVVSPLSRGTVDIASNDTEVNPIIDPRWFAHPGDIQVAVAGFRRSRALMASPAMAGITLGGESYPGTDVQTDDEIVEWLREASNTVHHACCTAGMGPRDNPDSVVDTQGRVIGVSGLRIVDASIMPFLPPGHPISIIYGLAERIAESILADA.

Residues 1–20 (MALRYLNKFSLLSLAVPTLA) form the signal peptide. FAD is bound by residues 45–46 (NA) and 65–66 (EA). 2 N-linked (GlcNAc...) asparagine glycosylation sites follow: Asn76 and Asn113. Residues Val123 and 131-134 (NLMT) contribute to the FAD site. N-linked (GlcNAc...) asparagine glycosylation is found at Asn282, Asn410, and Asn475. The active-site Proton acceptor is the His547. Catalysis depends on His547, which acts as the Proton donor. Ala581 contacts FAD. The active-site Proton acceptor is His591. An FAD-binding site is contributed by 592 to 593 (PI).

The protein belongs to the GMC oxidoreductase family. It depends on FAD as a cofactor.

It participates in phytotoxin biosynthesis. Functionally, oxidoreductase; part of the gene cluster that mediates the biosynthesis of cichorine, a phytotoxin active against knapweed, corn, and soybeans. The first step in the pathway is performed by the non-reducing polyketide synthase pkbA that condenses one acetyl-CoA starter unit with 3 malonyl-CoA units. PkbA also catalyzes one methylation step to produce 3-methylorsellinate. The nonribosomal peptide synthase-like protein cicB, the cytochrome P450 monooxygenase cicH and the O-methyltransferase cicE are involved in the conversion of 3-methylorsellinate into nidulol. CicB converts 3-methylorsellinate to a yet unidentified intermediate, cicH may play a ring-closing role for cichorine and cicE is plausibly responsible for the methylation of one of the phenol groups. The oxidoreductase cicC acts downstream with still unidentified enzymes to further convert nidulol into cichorine. The polypeptide is Oxidoreductase cicC (Emericella nidulans (strain FGSC A4 / ATCC 38163 / CBS 112.46 / NRRL 194 / M139) (Aspergillus nidulans)).